Here is a 319-residue protein sequence, read N- to C-terminus: Acetyl esterase (319 aa).

Residues histidine 91–glycine 93 carry the Involved in the stabilization of the negatively charged intermediate by the formation of the oxyanion hole motif. Residues serine 165, aspartate 262, and histidine 292 contribute to the active site.

This sequence belongs to the 'GDXG' lipolytic enzyme family. Homodimer. Interacts with MalT and MelA.

It is found in the cytoplasm. Functionally, displays esterase activity towards short chain fatty esters (acyl chain length of up to 8 carbons). Able to hydrolyze triacetylglycerol (triacetin) and tributyrylglycerol (tributyrin), but not trioleylglycerol (triolein) or cholesterol oleate. Negatively regulates MalT activity by antagonizing maltotriose binding. Inhibits MelA galactosidase activity. This is Acetyl esterase from Escherichia coli O157:H7.